A 195-amino-acid polypeptide reads, in one-letter code: Toxin protein Tse4 (195 aa).

4 consecutive transmembrane segments (helical) span residues 20-40 (ASGGGMTVAFLAGSGGSITLL), 116-136 (YVELGAGVIAGGSGTAILFGL), 140-160 (LLAAVALASASPLTAALGASM), and 171-191 (ALLMAGVNVGAQFGGGAAAYL).

The protein resides in the host membrane. It is found in the secreted. Its function is as follows. Toxin secreted by the H1 type VI (H1-T6SS) secretion system into the periplasm of recipient cells. In Pseudomonas aeruginosa (strain ATCC 15692 / DSM 22644 / CIP 104116 / JCM 14847 / LMG 12228 / 1C / PRS 101 / PAO1), this protein is Toxin protein Tse4.